The primary structure comprises 359 residues: Guanine nucleotide-binding protein subunit alpha-11 (359 aa).

Residues C9 and C10 are each lipidated (S-palmitoyl cysteine). Positions 38–359 (RELKLLLLGT…QLNLKEYNLV (322 aa)) constitute a G-alpha domain. A G1 motif region spans residues 41–54 (KLLLLGTGESGKST). GTP is bound by residues 46–53 (GTGESGKS) and 180–183 (LRVR). Residue S53 coordinates Mg(2+). Residues 178–186 (DVLRVRVPT) are G2 motif. Residue T186 coordinates Mg(2+). The G3 motif stretch occupies residues 201-210 (FRMVDVGGQR). The G4 motif stretch occupies residues 270 to 277 (ILFLNKKD). Residues 274–277 (NKKD) and A331 each bind GTP. A G5 motif region spans residues 329–334 (TCATDT).

This sequence belongs to the G-alpha family. G(q) subfamily. G proteins are composed of 3 units; alpha, beta and gamma. The alpha chain contains the guanine nucleotide binding site. Interacts with RGS22. Interacts with NTSR1.

It is found in the cell membrane. Its subcellular location is the cytoplasm. It catalyses the reaction GTP + H2O = GDP + phosphate + H(+). Its function is as follows. Guanine nucleotide-binding proteins (G proteins) function as transducers downstream of G protein-coupled receptors (GPCRs) in numerous signaling cascades. The alpha chain contains the guanine nucleotide binding site and alternates between an active, GTP-bound state and an inactive, GDP-bound state. Signaling by an activated GPCR promotes GDP release and GTP binding. The alpha subunit has a low GTPase activity that converts bound GTP to GDP, thereby terminating the signal. Both GDP release and GTP hydrolysis are modulated by numerous regulatory proteins. Signaling is mediated via phospholipase C-beta-dependent inositol lipid hydrolysis for signal propagation: activates phospholipase C-beta: following GPCR activation, GNA11 activates PLC-beta (PLCB1, PLCB2, PLCB3 or PLCB4), leading to production of diacylglycerol (DAG) and inositol 1,4,5-trisphosphate (IP3). Transduces FFAR4 signaling in response to long-chain fatty acids (LCFAs). Together with GNAQ, required for heart development. In the respiratory epithelium, transmits OXGR1-dependent signals that lead to downstream intracellular Ca(2+) release and mucocilliary clearance of airborne pathogens. This chain is Guanine nucleotide-binding protein subunit alpha-11 (Gna11), found in Mus musculus (Mouse).